A 255-amino-acid chain; its full sequence is ATP synthase subunit a 2 (255 aa).

The next 5 helical transmembrane spans lie at 24 to 44 (WFGI…VFIL), 86 to 106 (LIGP…AVDL), 131 to 151 (DINI…GYTF), 205 to 225 (MIFI…SVPW), and 226 to 246 (ALFH…LTVV).

The protein belongs to the ATPase A chain family. In terms of assembly, F-type ATPases have 2 components, CF(1) - the catalytic core - and CF(0) - the membrane proton channel. CF(1) has five subunits: alpha(3), beta(3), gamma(1), delta(1), epsilon(1). CF(0) has three main subunits: a(1), b(2) and c(9-12). The alpha and beta chains form an alternating ring which encloses part of the gamma chain. CF(1) is attached to CF(0) by a central stalk formed by the gamma and epsilon chains, while a peripheral stalk is formed by the delta and b chains.

It is found in the cell inner membrane. In terms of biological role, key component of the proton channel; it plays a direct role in the translocation of protons across the membrane. In Vibrio campbellii (strain ATCC BAA-1116), this protein is ATP synthase subunit a 2.